Consider the following 656-residue polypeptide: FAST kinase domain-containing protein 3, mitochondrial (656 aa).

One can recognise an RAP domain in the interval 587–645 (VALCIDGPQRFCLGSKHLLGKEAIKQRHLRLLGYQVVQVPYHELELLTSRLELVDYLQR).

The protein belongs to the FAST kinase family.

The protein resides in the mitochondrion. Required for normal mitochondrial respiration. Increases steady-state levels and half-lives of a subset of mature mitochondrial mRNAs MT-ND2, MT-ND3, MT-CYTB, MT-CO2, and MT-ATP8/6. Promotes MT-CO1 mRNA translation and increases mitochondrial complex IV assembly and activity. This chain is FAST kinase domain-containing protein 3, mitochondrial (Fastkd3), found in Rattus norvegicus (Rat).